Here is a 706-residue protein sequence, read N- to C-terminus: Polyribonucleotide nucleotidyltransferase (706 aa).

Mg(2+) contacts are provided by Asp483 and Asp489. The KH domain occupies 550–609 (PRITTIWVKTDKIRDVIGTGGKNIRNITETTGVTVDIEDTGRINIASTSKEACDLAIQMI). Positions 619-687 (GKLYMGIVKK…KNGKVKLSRK (69 aa)) constitute an S1 motif domain.

Belongs to the polyribonucleotide nucleotidyltransferase family. Mg(2+) is required as a cofactor.

The protein localises to the cytoplasm. It catalyses the reaction RNA(n+1) + phosphate = RNA(n) + a ribonucleoside 5'-diphosphate. Its function is as follows. Involved in mRNA degradation. Catalyzes the phosphorolysis of single-stranded polyribonucleotides processively in the 3'- to 5'-direction. In Pelobacter propionicus (strain DSM 2379 / NBRC 103807 / OttBd1), this protein is Polyribonucleotide nucleotidyltransferase.